We begin with the raw amino-acid sequence, 78 residues long: Acyl carrier protein (78 aa).

The Carrier domain occupies 1 to 76 (MSVAEKVKEI…DAISFIEKKK (76 aa)). S36 is subject to O-(pantetheine 4'-phosphoryl)serine.

Belongs to the acyl carrier protein (ACP) family. 4'-phosphopantetheine is transferred from CoA to a specific serine of apo-ACP by AcpS. This modification is essential for activity because fatty acids are bound in thioester linkage to the sulfhydryl of the prosthetic group.

The protein resides in the cytoplasm. The protein operates within lipid metabolism; fatty acid biosynthesis. Functionally, carrier of the growing fatty acid chain in fatty acid biosynthesis. In Solidesulfovibrio magneticus (strain ATCC 700980 / DSM 13731 / RS-1) (Desulfovibrio magneticus), this protein is Acyl carrier protein.